A 1293-amino-acid polypeptide reads, in one-letter code: MLDTNYYDRLQIGLATADQIRAWSHGEVKKPETINYRTLKPERDGLFCEKIFGPTRDWECYCGKYKRVRFKGIICERCGVEVTRSNVRRERMGHIELVAPVTHIWYFKGVPSRLGYLLDIAPKDLEKVIYFAAYMITAVDDEARHRDLPSLEAKVQTERSRLEQRRDSELEARRVKLEEDMAQLEADGAKADVRRKVKDGAEKELKHIETRAQRQIDRLDAVWDRFKNLKVQDLEGDEILYREMKSRFGKYFEGSMGAEAVKRRLHDFDLKSESEKLREIIKTGRGQKKTRALKRLKVVQAFLDSGNSPEAMVLDCVPVIPPDLRPMVQLDGGRFATSDLNDLYRRVINRNNRLKRLVDLGAPEIIVNNEKRMLQEAVDSLFDNGRRGRPVSGPGNRPLKSLSDMLKGKQGRFRQNLLGKRVDYSGRSVIVVGPQLKMHECGLPKTMALELFKPFVMKRLADLEHAQNVKSAKRMVERQRPVVWDVLEEVIKEHPVLLNRAPTLHRLGIQAFEPQLIEGKAIQLHPLVCSAFNADFDGDQMAVHLPLSPEAQAEARVLMLSTNNILKPADGRPVALPSHEMIIGAYYLTMALDGLKGEGRAFTSLAEAIMAHDLGELEIGAKIKLRLKGIVPPHDETVRADGSVILDTTLGQALFNEVLPDDYPYVDFLVGKKQIGKIVNDLSERMTQLEVAHVLDNLKDIGYKWGSLSGVTVSIGDVQTPPTKPEILAGYETRAAKVDREYDRGAVTEEERRQDLIQIWTEATAELTAAMEANFTQTNPIHMMVDSGARGSMTQMRQIAAMRGLVADPKGDIIPRPIKSNFREGLTVLEYFISTHGGRKGQADTALRTADSGYLTRRLVDVSQDVIVRENDCGTTRGMPKTIAVDDGNGNLVRVEGLDTAVYARCLAADAVDANGNVVVEANSDLGDEEISRLIAAGISQIKVRSVLTCTAAQGCCARCYGRSLSTGHLVDVGEAVGIIAAQSIGEPGTQLTMRTFHTGGVAGDDITQGLPRVVELFEARSPKGKSPLAEAAGVIRIDESDNRRKLVLVRDDGEDDVEYVVPRRARLEFDLDGTHRVIRDGVRVAAGEQLMGGTADPQDVLRISGVRRVQEYLVKEVQKVYNTQGAGIHEKHIEIVIRQMLRRITVIESGDTQMMPGELVDRGAYEAANRKAVAEGGRPAEGRPVLMGITKASLATESWLSAASFQETTKVLTDAAINGKTDTLVGLKENVILGKLIPAGTGLEVYRNMRVEPTAEAKAAAFTMNYDPFDYDFGSGSGEAVPLDDLDLGDLG.

Zn(2+) is bound by residues cysteine 60, cysteine 62, cysteine 75, and cysteine 78. Mg(2+) is bound by residues aspartate 535, aspartate 537, and aspartate 539. Zn(2+)-binding residues include cysteine 873, cysteine 950, cysteine 957, and cysteine 960.

This sequence belongs to the RNA polymerase beta' chain family. The RNAP catalytic core consists of 2 alpha, 1 beta, 1 beta' and 1 omega subunit. When a sigma factor is associated with the core the holoenzyme is formed, which can initiate transcription. Requires Mg(2+) as cofactor. Zn(2+) serves as cofactor.

It catalyses the reaction RNA(n) + a ribonucleoside 5'-triphosphate = RNA(n+1) + diphosphate. DNA-dependent RNA polymerase catalyzes the transcription of DNA into RNA using the four ribonucleoside triphosphates as substrates. The protein is DNA-directed RNA polymerase subunit beta' of Cutibacterium acnes (strain DSM 16379 / KPA171202) (Propionibacterium acnes).